Here is a 458-residue protein sequence, read N- to C-terminus: Argininosuccinate lyase (458 aa).

The protein belongs to the lyase 1 family. Argininosuccinate lyase subfamily.

The protein localises to the cytoplasm. It carries out the reaction 2-(N(omega)-L-arginino)succinate = fumarate + L-arginine. It functions in the pathway amino-acid biosynthesis; L-arginine biosynthesis; L-arginine from L-ornithine and carbamoyl phosphate: step 3/3. This chain is Argininosuccinate lyase, found in Vibrio cholerae serotype O1 (strain ATCC 39541 / Classical Ogawa 395 / O395).